The sequence spans 967 residues: Dolichyl-phosphooligosaccharide-protein glycotransferase 1 (967 aa).

Over 1–21 (MVKTQIKEKKKDEKVTIPLPG) the chain is Cytoplasmic. A helical transmembrane segment spans residues 22–42 (KIKTVLAFLVVLAFAAYGFYI). Over 43-112 (RHLTAGKYFS…ISIFGYNELE (70 aa)) the chain is Extracellular. The short motif at 53-55 (DPD) is the DXD motif 1 element. D55 is a binding site for Mn(2+). Residues 113 to 133 (AFLLWPPFVGFLSVIGVYLLG) traverse the membrane as a helical segment. Residues 134–135 (RK) are Cytoplasmic-facing. A helical transmembrane segment spans residues 136–156 (VLNEWAGMWGAIILSVLTANF). Residues 157–165 (SRTFSGNAR) lie on the Extracellular side of the membrane. Mn(2+) is bound by residues R165 and D167. Residues 165–167 (RGD) carry the DXD motif 2 motif. Residues 166-186 (GDGPFMMLFTFSAVLMLYYLT) form a helical membrane-spanning segment. Over 187–193 (EENKNKK) the chain is Cytoplasmic. A helical transmembrane segment spans residues 194-214 (IIWGTLFVLLAGISTAAWNGS). Position 215 (P215) is a topological domain, extracellular. The chain crosses the membrane as a helical span at residues 216–236 (FGLMVLLGFASFQTIILFIFG). The Cytoplasmic segment spans residues 237-247 (KINELREFIKE). Residues 248 to 268 (YYPAYLGILAISYLLTIPGIG) form a helical membrane-spanning segment. Residue K269 is a topological domain, extracellular. The chain crosses the membrane as a helical span at residues 270-290 (IGGFVRFAFEVFLGLVFLAIV). Residues 291 to 306 (MLYGGKYLNYSDKKHR) are Cytoplasmic-facing. The chain crosses the membrane as a helical span at residues 307-327 (FAVVAVIVIAGFAGAYIYVGP). The Extracellular segment spans residues 328 to 360 (KLFTLMGGAYQSTQVYETVQELAKTDWGDVKVY). The TIXE motif signature appears at 345–348 (TVQE). The chain crosses the membrane as a helical span at residues 361–381 (YGVEKPNGIVFFLGLVGAMIV). Over 382 to 396 (TARYLYKLFKDGRRP) the chain is Cytoplasmic. A helical transmembrane segment spans residues 397 to 417 (HEELFAITFYVMSIYLLWTAA). Position 418 (R418) is a topological domain, extracellular. Residue R418 coordinates a glycophospholipid. The chain crosses the membrane as a helical span at residues 419–439 (FLFLASYAIALMSGVFAGYVL). The Cytoplasmic segment spans residues 440–453 (ETVEKMKESIPIKA). A helical membrane pass occupies residues 454–474 (ALGGVIAIMLLLIPLTHGPLL). At 475–967 (AQSAKSMRTT…LEVSASAPHH (493 aa)) the chain is on the extracellular side. Residues 511 to 513 (WWD) are interacts with target acceptor peptide in protein substrate. The short motif at 511–515 (WWDYG) is the WWDYG motif element. Y516 provides a ligand contact to a glycophospholipid. The short motif at 571–578 (DWAKFNAI) is the DK motif element.

The protein belongs to the STT3 family. Requires Mn(2+) as cofactor. Mg(2+) serves as cofactor.

The protein localises to the cell membrane. It carries out the reaction an archaeal dolichyl phosphooligosaccharide + [protein]-L-asparagine = an archaeal dolichyl phosphate + a glycoprotein with the oligosaccharide chain attached by N-beta-D-glycosyl linkage to a protein L-asparagine.. The protein operates within protein modification; protein glycosylation. Functionally, oligosaccharyl transferase (OST) that catalyzes the initial transfer of a defined glycan (ManNAcXyl(2)GlcAMan(2)GalNAc in P.furiosus) from the lipid carrier dolichol-monophosphate to an asparagine residue within an Asn-X-Ser/Thr consensus motif in nascent polypeptide chains, the first step in protein N-glycosylation. This Pyrococcus furiosus (strain ATCC 43587 / DSM 3638 / JCM 8422 / Vc1) protein is Dolichyl-phosphooligosaccharide-protein glycotransferase 1 (aglB1).